Consider the following 303-residue polypeptide: Mesenteric estrogen-dependent adipogenesis protein (303 aa).

The protein resides in the cytoplasm. Its function is as follows. Involved in processes that promote adipocyte differentiation, lipid accumulation, and glucose uptake in mature adipocytes. This Bos taurus (Bovine) protein is Mesenteric estrogen-dependent adipogenesis protein (MEDAG).